Here is a 275-residue protein sequence, read N- to C-terminus: Low affinity immunoglobulin gamma Fc region receptor III-A (275 aa).

Residues 1 to 23 form the signal peptide; it reads MSVWTSRKAAEDNDTSLSSGIRA. The Extracellular portion of the chain corresponds to 24–207; it reads GLQKAVVTLH…SPSTFPPWHQ (184 aa). Ig-like C2-type domains follow at residues 28–92 and 101–192; these read AVVT…YTCQ and PVNL…LRIT. 2 disulfides stabilise this stretch: cysteine 49–cysteine 91 and cysteine 131–cysteine 175. N-linked (GlcNAc...) asparagine glycosylation is found at asparagine 65, asparagine 168, and asparagine 183. The chain crosses the membrane as a helical span at residues 208–228; sequence ITFCLLIGLLFTIDTVMYFSV. The Cytoplasmic segment spans residues 229 to 275; the sequence is QKGLRRSTADYEEPEVHWSKEPENKTISEEKQSFRSSRANSETPENR. The disordered stretch occupies residues 237-275; it reads ADYEEPEVHWSKEPENKTISEEKQSFRSSRANSETPENR. Tyrosine 239 carries the post-translational modification Phosphotyrosine. The span at 242–261 shows a compositional bias: basic and acidic residues; that stretch reads PEVHWSKEPENKTISEEKQS. Polar residues predominate over residues 262–275; that stretch reads FRSSRANSETPENR.

In terms of assembly, forms a heterooligomeric complex with ITAM-containing signaling subunits FCER1G. Interacts (via transmembrane domain) with signaling subunits; this interaction is a prerequisite for receptor complex expression on the cell surface and intracellular signal transduction. Binds the Fc region of antigen-complexed IgG. In terms of processing, N-glycosylated. Phosphorylated following receptor ligation.

It is found in the cell membrane. Functionally, receptor for the invariable Fc fragment of immunoglobulin gamma (IgG). Binds with intermediate affinity to both IgG2a and IgG2b. Can bind to IgG2a and IgG2b monomers. Does not display binding to IgG1 or IgG3. Recognizes neutralizing virus-specific IgGs displayed on the cell surface of infected cells and triggers antibody-dependent cellular cytotoxicity (ADCC). Confers protection to lethal influenza virus infection. On splenic dendritic cells, uptakes antigen immune complexes and efficiently divert them into MHC class I and II antigen presentation pathways to provide for superior priming of CD4-positive and CD8-positive T cell immune responses. Mediates neutrophil activation by IgG complexes redundantly with FCGR2A. Plays a role in promoting bone resorption by enhancing osteoclast differentiation following binding to IgG2a. Also acts as a receptor for the Fc region of immunoglobulin epsilon (IgE). Binds with low affinity to both the a and b allotypes of IgE. Has also been shown to bind to IgE allotype a only but not to allotype b. Binds aggregated IgE but not the monomeric form and bound monomeric IgG is readily displaced by IgE complexes. Binding to IgE promotes macrophage-mediated phagocytosis, antigen presentation to T cells, production of pro-inflammatory cytokines and the late phase of cutaneous allergic reactions. Mediates enhanced ADCC in response to afucosylated IgGs. The chain is Low affinity immunoglobulin gamma Fc region receptor III-A from Cricetulus griseus (Chinese hamster).